Here is a 251-residue protein sequence, read N- to C-terminus: Carbohydrate deacetylase (251 aa).

2 residues coordinate Mg(2+): H59 and H122.

This sequence belongs to the YdjC deacetylase family. Homodimer. Mg(2+) serves as cofactor.

Probably catalyzes the deacetylation of acetylated carbohydrates an important step in the degradation of oligosaccharides. This Vibrio campbellii (strain ATCC BAA-1116) protein is Carbohydrate deacetylase.